The following is a 116-amino-acid chain: Guanylin (116 aa).

The first 23 residues, 1-23 (MNACVLSVLCLLGALAVLVEGVT), serve as a signal peptide directing secretion. Residues 24-101 (VQDGDLSFPL…LQRLEAIAQD (78 aa)) constitute a propeptide that is removed on maturation. Cystine bridges form between C69–C83, C105–C113, and C108–C116.

Belongs to the guanylin family. As to expression, localized in both crypts and villi in the small intestine and to superficial epithelial cells in the colon.

It is found in the secreted. Functionally, endogenous activator of intestinal guanylate cyclase. It stimulates this enzyme through the same receptor binding region as the heat-stable enterotoxins. The sequence is that of Guanylin (Guca2a) from Mus musculus (Mouse).